The primary structure comprises 205 residues: RPW8-like protein 2 (205 aa).

The 153-residue stretch at methionine 1–isoleucine 153 folds into the RPW8 domain. The helical transmembrane segment at isoleucine 7 to isoleucine 23 threads the bilayer. Coiled-coil stretches lie at residues glutamate 70–arginine 92 and alanine 125–glutamine 147.

This sequence belongs to the plant RPW8 protein family.

It localises to the membrane. Probable disease resistance (R) protein. This chain is RPW8-like protein 2, found in Arabidopsis thaliana (Mouse-ear cress).